The primary structure comprises 443 residues: Probable serine transporter (443 aa).

At 1–48 the chain is on the cytoplasmic side; sequence MEIASNKGVIADASTPAGRAGMSESEWREAIKFDSTDTGWVIMSIGMA. Residues 49–69 form a helical membrane-spanning segment; sequence IGAGIVFLPVQVGLMGLWVFL. The Periplasmic segment spans residues 70 to 110; that stretch reads LSSVIGYPAMYLFQRLFINTLAESPECKDYPSVISGYLGKN. A helical transmembrane segment spans residues 111–131; the sequence is WGILLGALYFVMLVIWMFVYS. Over 132–149 the chain is Cytoplasmic; it reads TAITNDSASYLHTFGVTE. A helical transmembrane segment spans residues 150 to 170; it reads GLLSDSPFYGLVLICILVAIS. Residues 171–182 are Periplasmic-facing; that stretch reads SRGEKLLFKIST. A helical membrane pass occupies residues 183-203; that stretch reads GMVLTKLLVVAALGVSMVGMW. Residues 204–214 are Cytoplasmic-facing; that stretch reads HLYNVGSLPPL. A helical membrane pass occupies residues 215 to 235; that stretch reads GLLVKNAIITLPFTLTSILFI. At 236-264 the chain is on the periplasmic side; it reads QTLSPMVISYRSREKSIEVARHKALRAMN. The helical transmembrane segment at 265–285 threads the bilayer; that stretch reads IAFGILFVTVFFYAVSFTLAM. Over 286–297 the chain is Cytoplasmic; it reads GHDEAVKAYEQN. Helical transmembrane passes span 298–318 and 319–339; these read ISAL…WVKV and VSVI…YLGF. At 340 to 367 the chain is on the cytoplasmic side; the sequence is REATQGIVMNILRRKMPAEKINENLVQR. The chain crosses the membrane as a helical span at residues 368–388; it reads GIMIFAILLAWSAIVLNAPVL. Residue Ser-389 is a topological domain, periplasmic. The chain crosses the membrane as a helical span at residues 390–410; the sequence is FTSICSPIFGMVGCLIPAWLV. Over 411-421 the chain is Cytoplasmic; the sequence is YKVPALHKYKG. The helical transmembrane segment at 422–442 threads the bilayer; sequence MSLYLIIVTGLLLCVSPFLAF. A topological domain (periplasmic) is located at residue Ser-443.

The protein belongs to the amino acid/polyamine transporter 2 family. SdaC/TdcC subfamily.

It localises to the cell inner membrane. Functionally, plays a role in L-cysteine detoxification. May transport both D- and L-serine. The sequence is that of Probable serine transporter (dlsT) from Escherichia coli (strain K12).